The following is a 509-amino-acid chain: Histidine--tRNA ligase, cytoplasmic (509 aa).

Alanine 2 carries the N-acetylalanine modification. Residues 3–59 (ERAALEELVKLQGERVRGLKQQKASAELIEEEVAKLLKLKAQLGPDESKQKFVLKTP) form the WHEP-TRS domain. At serine 66 the chain carries Phosphoserine. L-histidine contacts are provided by residues 130–132 (DLT), arginine 157, glutamine 173, aspartate 177, arginine 326, and 330–331 (YY). Serine 356 bears the Phosphoserine mark.

This sequence belongs to the class-II aminoacyl-tRNA synthetase family. As to quaternary structure, homodimer. In terms of tissue distribution, brain, heart, liver and kidney.

The protein resides in the cytoplasm. The catalysed reaction is tRNA(His) + L-histidine + ATP = L-histidyl-tRNA(His) + AMP + diphosphate + H(+). In terms of biological role, catalyzes the ATP-dependent ligation of histidine to the 3'-end of its cognate tRNA, via the formation of an aminoacyl-adenylate intermediate (His-AMP). Plays a role in axon guidance. This chain is Histidine--tRNA ligase, cytoplasmic, found in Homo sapiens (Human).